The sequence spans 88 residues: Small ribosomal subunit protein bS16 (88 aa).

The protein belongs to the bacterial ribosomal protein bS16 family.

This is Small ribosomal subunit protein bS16 from Geotalea uraniireducens (strain Rf4) (Geobacter uraniireducens).